Consider the following 72-residue polypeptide: uncharacterized protein (72 aa).

It is found in the plastid. The protein localises to the chloroplast. This is an uncharacterized protein from Oenothera berteroana (Bertero's evening primrose).